We begin with the raw amino-acid sequence, 395 residues long: Indoleacetate--lysine synthetase (395 aa).

It belongs to the ATP-dependent AMP-binding enzyme family.

It carries out the reaction (indol-3-yl)acetate + L-lysine + ATP = N(6)-[(indole-3-yl)acetyl]-L-lysine + ADP + phosphate + H(+). Its function is as follows. Conversion of IAA to IAA-lysine. This is Indoleacetate--lysine synthetase (iaaL) from Pseudomonas savastanoi (Pseudomonas syringae pv. savastanoi).